We begin with the raw amino-acid sequence, 297 residues long: MTAKIIDGKVLAERLRGQVADEVARLRADYRLQPGLAVVLVGEDPASQVYVRSKGEHSLAVGMHSVTHRLPADTRQDELLRLVAELNADPLIHGILVQLPLPKHLDEKAVIAAISPDKDVDGLHVVNAGRLASGLPALVPCTPLGCLIMLRETLGDLTGKRAVVVGRSLLVGKPVAQLLLQADCTVTIAHSRTVDLPAVCREADILVAAVGRPRMIRGDWIKPGATVIDVGINRVPFDDPEKAAQGKTKLVGDVHYKEALQVAGAVTPVPGGVGLMTVACLLQNTVTAAKRLAGIEG.

Residues 166 to 168, serine 191, and isoleucine 232 each bind NADP(+); that span reads GRS.

The protein belongs to the tetrahydrofolate dehydrogenase/cyclohydrolase family. As to quaternary structure, homodimer.

It catalyses the reaction (6R)-5,10-methylene-5,6,7,8-tetrahydrofolate + NADP(+) = (6R)-5,10-methenyltetrahydrofolate + NADPH. It carries out the reaction (6R)-5,10-methenyltetrahydrofolate + H2O = (6R)-10-formyltetrahydrofolate + H(+). It participates in one-carbon metabolism; tetrahydrofolate interconversion. Catalyzes the oxidation of 5,10-methylenetetrahydrofolate to 5,10-methenyltetrahydrofolate and then the hydrolysis of 5,10-methenyltetrahydrofolate to 10-formyltetrahydrofolate. The sequence is that of Bifunctional protein FolD from Phenylobacterium zucineum (strain HLK1).